The sequence spans 222 residues: Superoxide dismutase [Mn], mitochondrial (222 aa).

A mitochondrion-targeting transit peptide spans 1–24 (MLSRGVCGTSRQLAPALGYLGSRQ). Histidine 50 is a Mn(2+) binding site. At tyrosine 58 the chain carries 3'-nitrotyrosine. 2 positions are modified to N6-acetyllysine; alternate: lysine 68 and lysine 75. N6-succinyllysine; alternate is present on residues lysine 68 and lysine 75. Histidine 98 contacts Mn(2+). Position 114 is an N6-acetyllysine (lysine 114). An N6-acetyllysine; alternate mark is found at lysine 122 and lysine 130. N6-succinyllysine; alternate occurs at positions 122 and 130. The Mn(2+) site is built by aspartate 183 and histidine 187. Residue lysine 202 is modified to N6-acetyllysine.

The protein belongs to the iron/manganese superoxide dismutase family. In terms of assembly, homotetramer. Mn(2+) is required as a cofactor. In terms of processing, nitrated under oxidative stress. Nitration coupled with oxidation inhibits the catalytic activity. Acetylation at Lys-122 decreases enzymatic activity. Deacetylated by SIRT3 upon exposure to ionizing radiations or after long fasting. Post-translationally, polyubiquitinated; leading to proteasomal degradation. Deubiquitinated by USP36 which increases protein stability.

The protein resides in the mitochondrion matrix. The enzyme catalyses 2 superoxide + 2 H(+) = H2O2 + O2. Its function is as follows. Destroys superoxide anion radicals which are normally produced within the cells and which are toxic to biological systems. The sequence is that of Superoxide dismutase [Mn], mitochondrial (SOD2) from Pongo pygmaeus (Bornean orangutan).